The sequence spans 157 residues: 2-C-methyl-D-erythritol 2,4-cyclodiphosphate synthase (157 aa).

Residues D8 and H10 each coordinate a divalent metal cation. 4-CDP-2-C-methyl-D-erythritol 2-phosphate is bound by residues 8–10 (DVH) and 34–35 (HS). H42 serves as a coordination point for a divalent metal cation. 4-CDP-2-C-methyl-D-erythritol 2-phosphate is bound by residues 56–58 (DIG), 132–135 (TTNE), and R142.

Belongs to the IspF family. As to quaternary structure, homotrimer. A divalent metal cation serves as cofactor.

The catalysed reaction is 4-CDP-2-C-methyl-D-erythritol 2-phosphate = 2-C-methyl-D-erythritol 2,4-cyclic diphosphate + CMP. Its pathway is isoprenoid biosynthesis; isopentenyl diphosphate biosynthesis via DXP pathway; isopentenyl diphosphate from 1-deoxy-D-xylulose 5-phosphate: step 4/6. Involved in the biosynthesis of isopentenyl diphosphate (IPP) and dimethylallyl diphosphate (DMAPP), two major building blocks of isoprenoid compounds. Catalyzes the conversion of 4-diphosphocytidyl-2-C-methyl-D-erythritol 2-phosphate (CDP-ME2P) to 2-C-methyl-D-erythritol 2,4-cyclodiphosphate (ME-CPP) with a corresponding release of cytidine 5-monophosphate (CMP). The polypeptide is 2-C-methyl-D-erythritol 2,4-cyclodiphosphate synthase (Chlorobaculum parvum (strain DSM 263 / NCIMB 8327) (Chlorobium vibrioforme subsp. thiosulfatophilum)).